Reading from the N-terminus, the 147-residue chain is HETDSDGQVMNSMIEALTELQEMIVNLRYAFLTVHKARSFGSGSERLYVSNKEIKTFEPLKEICEEAGGHIPSPQLENQNKAFANVLERHNKAAYLVVGDSANFTNWAAGQPNEADGTCVKADTHGFWHSASCDEKLLVVCEFYFIL.

A C-type lectin domain is found at 62-143; it reads EICEEAGGHI…DEKLLVVCEF (82 aa). Cystine bridges form between Cys64–Cys141 and Cys119–Cys133. N-linked (GlcNAc...) asparagine glycosylation occurs at Asn103.

Belongs to the alpha-type phospholipase A2 inhibitor family. As to quaternary structure, homo- or heterotrimer; homotrimer of PLI-A chains, two PLI-A and one PLI-B chains, one PLI-A and two PLI-B chains, and homotrimer of PLI-B chains (with a ratio of 1:3:3:1). In terms of tissue distribution, expressed by the liver.

The protein localises to the secreted. Its function is as follows. PLI binds directly phospholipase A2 in the presence or absence of calcium. Inhibitory activity of the PLI-B homotrimer is less specific than that of the PLI-A homotrimer. The protein is Phospholipase A2 inhibitor subunit B of Protobothrops flavoviridis (Habu).